Here is a 359-residue protein sequence, read N- to C-terminus: Transcription elongation factor A N-terminal and central domain-containing protein (359 aa).

A TFIIS N-terminal domain is found at methionine 1–threonine 82. Positions cysteine 84–serine 118 are disordered. Polar residues predominate over residues alanine 104–serine 118. Residues valine 182–glycine 298 enclose the TFIIS central domain.

The protein is Transcription elongation factor A N-terminal and central domain-containing protein (Tceanc) of Mus musculus (Mouse).